A 188-amino-acid chain; its full sequence is GPI-anchored hemophore ARB_01017 (188 aa).

An N-terminal signal peptide occupies residues 1–17 (MKLSVVALAALVSVAAA). One can recognise a CFEM domain in the interval 18-107 (QGVSELPKCA…SSSSGSASST (90 aa)). 4 disulfide bridges follow: Cys26/Cys64, Cys30/Cys59, Cys39/Cys45, and Cys47/Cys80. A heme-binding site is contributed by Asp42. The segment at 95–163 (TGGSSSSGSA…ATSTGAPTQT (69 aa)) is disordered. The GPI-anchor amidated asparagine moiety is linked to residue Asn165. A propeptide spans 166-188 (AAASVNANGGLLAAIAALVIAVA) (removed in mature form).

Belongs to the RBT5 family. The GPI-anchor is attached to the protein in the endoplasmic reticulum and serves to target the protein to the cell surface. There, the glucosamine-inositol phospholipid moiety is cleaved off and the GPI-modified mannoprotein is covalently attached via its lipidless GPI glycan remnant to the 1,6-beta-glucan of the outer cell wall layer.

It localises to the secreted. The protein localises to the cell wall. It is found in the cell membrane. GPI-anchored cell wall protein involved in stabilizing the cell wall. The protein is GPI-anchored hemophore ARB_01017 of Arthroderma benhamiae (strain ATCC MYA-4681 / CBS 112371) (Trichophyton mentagrophytes).